Here is a 206-residue protein sequence, read N- to C-terminus: Probable N-acetyltransferase 14 (206 aa).

Residues Leu-9–Ile-206 form the N-acetyltransferase domain. 2 helical membrane passes run Leu-37 to Gly-57 and Phe-60 to Leu-80.

It belongs to the camello family.

Its subcellular location is the membrane. Its function is as follows. Probable acetyltransferase. The chain is Probable N-acetyltransferase 14 (nat14) from Xenopus tropicalis (Western clawed frog).